Here is a 151-residue protein sequence, read N- to C-terminus: SsrA-binding protein (151 aa).

Belongs to the SmpB family.

The protein resides in the cytoplasm. Functionally, required for rescue of stalled ribosomes mediated by trans-translation. Binds to transfer-messenger RNA (tmRNA), required for stable association of tmRNA with ribosomes. tmRNA and SmpB together mimic tRNA shape, replacing the anticodon stem-loop with SmpB. tmRNA is encoded by the ssrA gene; the 2 termini fold to resemble tRNA(Ala) and it encodes a 'tag peptide', a short internal open reading frame. During trans-translation Ala-aminoacylated tmRNA acts like a tRNA, entering the A-site of stalled ribosomes, displacing the stalled mRNA. The ribosome then switches to translate the ORF on the tmRNA; the nascent peptide is terminated with the 'tag peptide' encoded by the tmRNA and targeted for degradation. The ribosome is freed to recommence translation, which seems to be the essential function of trans-translation. This Campylobacter fetus subsp. fetus (strain 82-40) protein is SsrA-binding protein.